We begin with the raw amino-acid sequence, 227 residues long: Phosphoribosylformylglycinamidine synthase subunit PurQ (227 aa).

One can recognise a Glutamine amidotransferase type-1 domain in the interval 3-225; it reads FAVIVFPGSN…LKQWRETYVV (223 aa). C86 (nucleophile) is an active-site residue. Catalysis depends on residues H194 and E196.

As to quaternary structure, part of the FGAM synthase complex composed of 1 PurL, 1 PurQ and 2 PurS subunits.

It localises to the cytoplasm. The enzyme catalyses N(2)-formyl-N(1)-(5-phospho-beta-D-ribosyl)glycinamide + L-glutamine + ATP + H2O = 2-formamido-N(1)-(5-O-phospho-beta-D-ribosyl)acetamidine + L-glutamate + ADP + phosphate + H(+). It catalyses the reaction L-glutamine + H2O = L-glutamate + NH4(+). Its pathway is purine metabolism; IMP biosynthesis via de novo pathway; 5-amino-1-(5-phospho-D-ribosyl)imidazole from N(2)-formyl-N(1)-(5-phospho-D-ribosyl)glycinamide: step 1/2. Functionally, part of the phosphoribosylformylglycinamidine synthase complex involved in the purines biosynthetic pathway. Catalyzes the ATP-dependent conversion of formylglycinamide ribonucleotide (FGAR) and glutamine to yield formylglycinamidine ribonucleotide (FGAM) and glutamate. The FGAM synthase complex is composed of three subunits. PurQ produces an ammonia molecule by converting glutamine to glutamate. PurL transfers the ammonia molecule to FGAR to form FGAM in an ATP-dependent manner. PurS interacts with PurQ and PurL and is thought to assist in the transfer of the ammonia molecule from PurQ to PurL. This Bacillus cereus (strain 03BB102) protein is Phosphoribosylformylglycinamidine synthase subunit PurQ.